Reading from the N-terminus, the 132-residue chain is Phosphoribosyl-ATP pyrophosphatase (132 aa).

It belongs to the PRA-PH family.

The protein resides in the cytoplasm. It carries out the reaction 1-(5-phospho-beta-D-ribosyl)-ATP + H2O = 1-(5-phospho-beta-D-ribosyl)-5'-AMP + diphosphate + H(+). It participates in amino-acid biosynthesis; L-histidine biosynthesis; L-histidine from 5-phospho-alpha-D-ribose 1-diphosphate: step 2/9. The polypeptide is Phosphoribosyl-ATP pyrophosphatase (Acidovorax sp. (strain JS42)).